The following is a 669-amino-acid chain: DNA helicase/primase complex-associated protein (669 aa).

The interval 502-526 (RSTAGTGGEPNPRHITGPDTEGNGE) is disordered.

Belongs to the herpesviridae HEPA family. In terms of assembly, associates with the primase and the helicase to form the helicase-primase complex. Interacts with the origin-binding protein. Interacts with the polymerase catalytic subunit.

The protein localises to the host nucleus. Its function is as follows. Component of the helicase/primase complex. Unwinds the DNA at the replication forks and generates single-stranded DNA for both leading and lagging strand synthesis. The primase synthesizes short RNA primers on the lagging strand that the polymerase presumably elongates using dNTPs. The primase-associated factor has no known catalytic activity in the complex and may serve to facilitate the formation of the replisome by directly interacting with the origin-binding protein and the polymerase. This Human herpesvirus 8 type P (isolate GK18) (HHV-8) protein is DNA helicase/primase complex-associated protein (ORF40).